Consider the following 793-residue polypeptide: RNA-binding protein spenito (793 aa).

Disordered stretches follow at residues 1–93 (MSSH…PPAE) and 243–296 (HHDY…KKDK). A compositionally biased stretch (low complexity) spans 25 to 42 (SRSPGPASRSSLSRNSRS). Basic residues predominate over residues 257–268 (RGGHPHHLHGHA). Positions 285–296 (APYEKPESKKDK) are enriched in basic and acidic residues. RRM domains lie at 314-391 (RTLF…YGKV) and 395-469 (TRMW…FAEL). Residues 507–623 (YAPRGGYSPY…RNDALASAST (117 aa)) are disordered. The span at 526–536 (GGYRGRGRGMY) shows a compositional bias: basic residues. Residues 566-593 (DEWRRPPGESYDRGARSSSREPGVERSR) are compositionally biased toward basic and acidic residues. In terms of domain architecture, SPOC spans 624–791 (VPDVARKCST…HLVIVVVRGG (168 aa)).

It belongs to the RRM Spen family. Component of the WMM complex, a N6-methyltransferase complex composed of a catalytic subcomplex, named MAC, and of an associated subcomplex, named MACOM. The MAC subcomplex is composed of Ime4/Mettl3 and Mettl14. The MACOM subcomplex is composed of fl(2)d, Flacc/Xio, Hakai, vir, and, in some cases of nito. Interacts with Sxl. Interacts with Hipk; leading to phosphorylation. In terms of processing, phosphorylated by Hipk at Ser-23, Ser-25 and/or Ser-27; the precise position if phosphorylation sites is unknown. Widely expressed. Shows some enrichment in the central nervous system.

It localises to the nucleus. Functionally, RNA-binding protein that acts as an associated component of the WMM complex, a complex that mediates N6-methyladenosine (m6A) methylation of mRNAs. M6a modification plays a role in the efficiency of mRNA splicing and is required for sex determination. In the WMM complex, may act by binding target RNAs and recruiting the WMM complex. Required for sex determination and dosage compensation via Sxl alternative splicing: m6A methylation acts as a key regulator of Sxl pre-mRNA and promotes female-specific alternative splicing of Sxl, which determines female physiognomy. M6A methylation is also required for neuronal functions. Acts as a positive regulator of canonical Wg signaling during wing disk and eye development. This Drosophila melanogaster (Fruit fly) protein is RNA-binding protein spenito.